Reading from the N-terminus, the 331-residue chain is Phosphoribosylformylglycinamidine cyclo-ligase (331 aa).

It belongs to the AIR synthase family.

Its subcellular location is the cytoplasm. It catalyses the reaction 2-formamido-N(1)-(5-O-phospho-beta-D-ribosyl)acetamidine + ATP = 5-amino-1-(5-phospho-beta-D-ribosyl)imidazole + ADP + phosphate + H(+). The protein operates within purine metabolism; IMP biosynthesis via de novo pathway; 5-amino-1-(5-phospho-D-ribosyl)imidazole from N(2)-formyl-N(1)-(5-phospho-D-ribosyl)glycinamide: step 2/2. The polypeptide is Phosphoribosylformylglycinamidine cyclo-ligase (Clostridium botulinum (strain 657 / Type Ba4)).